The following is a 431-amino-acid chain: Tryptophan synthase beta chain 2 (431 aa).

Residue lysine 111 is modified to N6-(pyridoxal phosphate)lysine.

Belongs to the TrpB family. As to quaternary structure, tetramer of two alpha and two beta chains. The cofactor is pyridoxal 5'-phosphate.

The catalysed reaction is (1S,2R)-1-C-(indol-3-yl)glycerol 3-phosphate + L-serine = D-glyceraldehyde 3-phosphate + L-tryptophan + H2O. It participates in amino-acid biosynthesis; L-tryptophan biosynthesis; L-tryptophan from chorismate: step 5/5. Functionally, the beta subunit is responsible for the synthesis of L-tryptophan from indole and L-serine. This chain is Tryptophan synthase beta chain 2 (trpB2), found in Sulfurisphaera tokodaii (strain DSM 16993 / JCM 10545 / NBRC 100140 / 7) (Sulfolobus tokodaii).